The primary structure comprises 296 residues: Maltose/maltodextrin transport system permease protein MalG (296 aa).

The Cytoplasmic segment spans residues 1–12 (MAMVQPKSQKAR). The helical transmembrane segment at 13 to 35 (LFITHLLLLLFIAAIMFPLLMVV) threads the bilayer. Residues 36–88 (AISLRQGNFATGSLIPEQISWDHWKLALGFSVEQADGRITPPPFPVLLWLWNS) are Periplasmic-facing. Positions 85–281 (LWNSVKVAGI…LPITIVFLLA (197 aa)) constitute an ABC transmembrane type-1 domain. The chain crosses the membrane as a helical span at residues 89-111 (VKVAGISAIGIVALSTTCAYAFA). The Cytoplasmic segment spans residues 112-123 (RMRFPGKATLLK). The chain crosses the membrane as a helical span at residues 124-143 (GMLIFQMFPAVLSLVALYAL). Topologically, residues 144–152 (FDRLGEYIP) are periplasmic. A helical transmembrane segment spans residues 153-175 (FIGLNTHGGVIFAYLGGIALHVW). The Cytoplasmic portion of the chain corresponds to 176 to 204 (TIKGYFETIDSSLEEAAALDGATPWQAFR). Residues 205-227 (LVLLPLSVPILAVVFILSFIAAI) traverse the membrane as a helical segment. Residues 228-257 (TEVPVASLLLRDVNSYTLAVGMQQYLNPQN) lie on the Periplasmic side of the membrane. A helical transmembrane segment spans residues 258-280 (YLWGDFAAAAVMSALPITIVFLL). The Cytoplasmic segment spans residues 281–296 (AQRWLVNGLTAGGVKG).

It belongs to the binding-protein-dependent transport system permease family. MalFG subfamily. The complex is composed of two ATP-binding proteins (MalK), two transmembrane proteins (MalG and MalF) and a solute-binding protein (MalE).

It localises to the cell inner membrane. Part of the ABC transporter complex MalEFGK involved in maltose/maltodextrin import. Probably responsible for the translocation of the substrate across the membrane. This chain is Maltose/maltodextrin transport system permease protein MalG (malG), found in Escherichia coli O157:H7.